Consider the following 1062-residue polypeptide: 3-hydroxy-3-methylglutaryl-coenzyme A reductase 2 (1062 aa).

The Cytoplasmic portion of the chain corresponds to 1-34 (MAPTNTKDSDTPGWLHRHGTSVLGSVARQACKQP). The chain crosses the membrane as a helical span at residues 35-55 (IYTLVITALLATMTYTSLLEG). The Lumenal portion of the chain corresponds to 56–230 (SLYNANLTRL…SFVGLIKHAQ (175 aa)). N61 carries N-linked (GlcNAc...) asparagine glycosylation. A helical membrane pass occupies residues 231-251 (IIDIIIMLLAYLAMHLTFLSL). The 171-residue stretch at 233–403 (DIIIMLLAYL…FTFYISVLCV (171 aa)) folds into the SSD domain. At 252-261 (FMSMRQLGSR) the chain is on the cytoplasmic side. A helical membrane pass occupies residues 262–282 (FWLAYSVLLSGFFSLFFGLKV). The Lumenal portion of the chain corresponds to 283-287 (TTSSG). The helical transmembrane segment at 288-308 (VSTSMITLSECLPILVIIVGF) threads the bilayer. Over 309–355 (EKPIRLTRAVLRAATESYLPAKPMARRSTPEAIEVAIMREGWRIVRD) the chain is Cytoplasmic. Residues 356 to 375 (YAIEIAILAAGATSRVQGAL) form a helical membrane-spanning segment. Residues 376-377 (PQ) lie on the Lumenal side of the membrane. Residues 378–398 (FCFLAAWILLFDSLLLFTFYI) traverse the membrane as a helical segment. At 399–450 (SVLCVKLEITRIRKHVEPRRALEDDDISTGNQDFDSRVFGCKVKAANISRFK) the chain is on the cytoplasmic side. Residues 451–471 (FLMVGGFVLFNVLQLSSLTYG) traverse the membrane as a helical segment. Residues 472-564 (NVRVSDWMPY…GCVLAWLEDP (93 aa)) are Lumenal-facing. N-linked (GlcNAc...) asparagine glycosylation occurs at N484. Residues 565 to 585 (VISKWVIAALFLSLVLNSYLM) traverse the membrane as a helical segment. The Cytoplasmic portion of the chain corresponds to 586 to 1062 (KAARWNLRQS…NRSKVAAKTG (477 aa)). E744 acts as the Charge relay system in catalysis. 750-756 (SASRGCK) contacts CoA. NADP(+) contacts are provided by residues 811 to 813 (SRF) and 838 to 846 (DAMGMNMIS). Residue K877 is the Charge relay system of the active site. CoA is bound at residue 906–908 (VLK). D953 functions as the Charge relay system in the catalytic mechanism. 1048-1049 (AH) is a CoA binding site. The active-site Proton donor is the H1049. 1053-1054 (NR) serves as a coordination point for NADP(+).

It belongs to the HMG-CoA reductase family.

It is found in the endoplasmic reticulum membrane. It catalyses the reaction (R)-mevalonate + 2 NADP(+) + CoA = (3S)-3-hydroxy-3-methylglutaryl-CoA + 2 NADPH + 2 H(+). It functions in the pathway metabolic intermediate biosynthesis; (R)-mevalonate biosynthesis; (R)-mevalonate from acetyl-CoA: step 3/3. Functionally, HMG-CoA reductase; part of the first module of ergosterol biosynthesis pathway that includes the early steps of the pathway, conserved across all eukaryotes, and which results in the formation of mevalonate from acetyl-coenzyme A (acetyl-CoA). Hmg1 and hmg2 catalyze the reduction of hydroxymethylglutaryl-CoA (HMG-CoA) to mevalonate. The first module starts with the action of the cytosolic acetyl-CoA acetyltransferase erg10B that catalyzes the formation of acetoacetyl-CoA. The hydroxymethylglutaryl-CoA synthases erg13A and erg13B then condense acetyl-CoA with acetoacetyl-CoA to form HMG-CoA. The rate-limiting step of the early module is the reduction to mevalonate by the 3-hydroxy-3-methylglutaryl-coenzyme A (HMG-CoA) reductases hmg1 and hmg2. Mevalonate is also a precursor for the extracellular siderophore triacetylfusarinine C (TAFC). The polypeptide is 3-hydroxy-3-methylglutaryl-coenzyme A reductase 2 (Aspergillus fumigatus (strain ATCC MYA-4609 / CBS 101355 / FGSC A1100 / Af293) (Neosartorya fumigata)).